The following is a 394-amino-acid chain: Elongation factor Tu 2 (394 aa).

The 195-residue stretch at 10-204 folds into the tr-type G domain; it reads KPHVNVGTIG…ALDSYIPEPE (195 aa). The segment at 19-26 is G1; it reads GHVDHGKT. 19–26 is a binding site for GTP; that stretch reads GHVDHGKT. Thr26 is a Mg(2+) binding site. Residues 60-64 form a G2 region; the sequence is GITIN. The tract at residues 81–84 is G3; the sequence is DCPG. Residues 81-85 and 136-139 each bind GTP; these read DCPGH and NKCD. The interval 136–139 is G4; the sequence is NKCD. The G5 stretch occupies residues 174–176; sequence SAL.

The protein belongs to the TRAFAC class translation factor GTPase superfamily. Classic translation factor GTPase family. EF-Tu/EF-1A subfamily. Monomer.

Its subcellular location is the cytoplasm. The catalysed reaction is GTP + H2O = GDP + phosphate + H(+). In terms of biological role, GTP hydrolase that promotes the GTP-dependent binding of aminoacyl-tRNA to the A-site of ribosomes during protein biosynthesis. This Shewanella oneidensis (strain ATCC 700550 / JCM 31522 / CIP 106686 / LMG 19005 / NCIMB 14063 / MR-1) protein is Elongation factor Tu 2.